Here is a 137-residue protein sequence, read N- to C-terminus: Proofreading thioesterase EntH (137 aa).

Residue E63 is the Nucleophile or proton acceptor of the active site.

This sequence belongs to the thioesterase PaaI family. As to quaternary structure, homotetramer. Dimer of dimers. Interacts specifically with the aryl carrier protein (ArCP) domain of EntB.

The protein resides in the cytoplasm. Its pathway is siderophore biosynthesis; enterobactin biosynthesis. Its function is as follows. Required for optimal enterobactin synthesis. Acts as a proofreading enzyme that prevents EntB misacylation by hydrolyzing the thioester bound existing between EntB and wrongly charged molecules. In Escherichia coli O6:H1 (strain CFT073 / ATCC 700928 / UPEC), this protein is Proofreading thioesterase EntH.